A 289-amino-acid chain; its full sequence is MYB transcription factor 69 (289 aa).

HTH myb-type domains lie at Lys9–Leu61 and Arg62–Leu116. 2 DNA-binding regions (H-T-H motif) span residues Trp37–Leu61 and Trp89–Leu112. Disordered stretches follow at residues Ala127–Thr162 and Ser225–Gln252. The span at Ala139–His154 shows a compositional bias: basic and acidic residues.

Mainly expressed in highly lignified tissues such as vascular tissues.

It is found in the nucleus. Its function is as follows. Transcription factor that binds to the promoter of MYB31 and MYB42 and activates directly their expression, thus repressing lignin biosynthesis. In Zea mays (Maize), this protein is MYB transcription factor 69.